Consider the following 418-residue polypeptide: F420-non-reducing hydrogenase vhu subunit A (418 aa).

Ni(2+)-binding residues include Cys-61 and Cys-64.

The protein belongs to the [NiFe]/[NiFeSe] hydrogenase large subunit family. In terms of assembly, the F420-non-reducing hydrogenase vhu is composed of four subunits; VhuA, VhuD, VhuG and VhuU. The cofactor is Ni(2+).

In Methanocaldococcus jannaschii (strain ATCC 43067 / DSM 2661 / JAL-1 / JCM 10045 / NBRC 100440) (Methanococcus jannaschii), this protein is F420-non-reducing hydrogenase vhu subunit A (vhuA).